Reading from the N-terminus, the 506-residue chain is Maturase K (506 aa).

The protein belongs to the intron maturase 2 family. MatK subfamily.

It is found in the plastid. It localises to the chloroplast. In terms of biological role, usually encoded in the trnK tRNA gene intron. Probably assists in splicing its own and other chloroplast group II introns. The polypeptide is Maturase K (Styphnolobium japonicum (Japanese pagoda tree)).